The following is a 646-amino-acid chain: Protein real-time (646 aa).

Residues 2–175 (VQKYESPVRI…FINELKKEGI (174 aa)) enclose the PRELI/MSF1 domain. Residues 294–471 (TPVVVEKYFP…FLGGSCITMI (178 aa)) enclose the CRAL-TRIO domain. Residues 499–646 (HHGLYKSVDL…GFSSNSLQSR (148 aa)) form the GOLD domain.

The protein localises to the mitochondrion. The chain is Protein real-time from Aedes aegypti (Yellowfever mosquito).